The primary structure comprises 339 residues: HTH-type transcriptional regulator PtxS (339 aa).

Residues 12–67 (VTISEVARVAGVSKATVSRYIGGDRQLLAEATAKRLEEVIERLGYRPNQMARGLKR) form the HTH lacI-type domain. Residues 14–33 (ISEVARVAGVSKATVSRYIG) constitute a DNA-binding region (H-T-H motif).

As to quaternary structure, homodimer in solution.

With respect to regulation, 2-ketogluconate acts as a molecular effector and causes dissociation of PtxS from its target promoter. Functionally, negatively regulates glucose metabolism by binding directly to the promoter region of the kgu and gad operons. It also negatively regulates its own synthesis. The chain is HTH-type transcriptional regulator PtxS from Pseudomonas putida (strain ATCC 47054 / DSM 6125 / CFBP 8728 / NCIMB 11950 / KT2440).